A 411-amino-acid polypeptide reads, in one-letter code: Ferrochelatase, mitochondrial (411 aa).

Residues 1–41 constitute a mitochondrion transit peptide; it reads MAAFRAAHRLLGHILRNESSAGLVTQRWSSSAAVASVPKSS. A disordered region spans residues 34 to 55; sequence VASVPKSSDPKPHAQPDKRKPK. Positions 41-51 are enriched in basic and acidic residues; it reads SDPKPHAQPDK. Protoporphyrin IX-binding residues include R102, Y110, and S117. C183 lines the [2Fe-2S] cluster pocket. Active-site residues include H217 and D370. 3 residues coordinate [2Fe-2S] cluster: C390, C393, and C398.

It belongs to the ferrochelatase family. As to quaternary structure, homodimer. Homotetramer. Requires [2Fe-2S] cluster as cofactor.

It localises to the mitochondrion inner membrane. It catalyses the reaction heme b + 2 H(+) = protoporphyrin IX + Fe(2+). The protein operates within porphyrin-containing compound metabolism; protoheme biosynthesis; protoheme from protoporphyrin-IX: step 1/1. Functionally, catalyzes the ferrous insertion into protoporphyrin IX. This Xenopus laevis (African clawed frog) protein is Ferrochelatase, mitochondrial.